We begin with the raw amino-acid sequence, 98 residues long: Large ribosomal subunit protein bL28 (98 aa).

This sequence belongs to the bacterial ribosomal protein bL28 family.

This Bartonella bacilliformis (strain ATCC 35685 / KC583 / Herrer 020/F12,63) protein is Large ribosomal subunit protein bL28.